Here is a 108-residue protein sequence, read N- to C-terminus: UPF0060 membrane protein BH2744 (108 aa).

4 consecutive transmembrane segments (helical) span residues 6 to 26 (TLFL…WLWL), 31 to 51 (PVYL…IATF), 60 to 80 (VYAA…WWID), and 86 to 106 (TYDW…LWAP).

Belongs to the UPF0060 family.

It localises to the cell membrane. The chain is UPF0060 membrane protein BH2744 from Halalkalibacterium halodurans (strain ATCC BAA-125 / DSM 18197 / FERM 7344 / JCM 9153 / C-125) (Bacillus halodurans).